We begin with the raw amino-acid sequence, 131 residues long: Large ribosomal subunit protein bL12 (131 aa).

It belongs to the bacterial ribosomal protein bL12 family. As to quaternary structure, homodimer. Part of the ribosomal stalk of the 50S ribosomal subunit. Forms a multimeric L10(L12)X complex, where L10 forms an elongated spine to which 2 to 4 L12 dimers bind in a sequential fashion. Binds GTP-bound translation factors.

Functionally, forms part of the ribosomal stalk which helps the ribosome interact with GTP-bound translation factors. Is thus essential for accurate translation. In Nocardioides sp. (strain ATCC BAA-499 / JS614), this protein is Large ribosomal subunit protein bL12.